A 465-amino-acid polypeptide reads, in one-letter code: Fumarate hydratase class II (465 aa).

Substrate is bound by residues serine 99–threonine 101, arginine 127, histidine 130–aspartate 133, serine 140–asparagine 142, and threonine 188. Histidine 189 acts as the Proton donor/acceptor in catalysis. The active site involves serine 319. Residues serine 320 and lysine 325 to asparagine 327 contribute to the substrate site.

Belongs to the class-II fumarase/aspartase family. Fumarase subfamily. Homotetramer.

The protein localises to the cytoplasm. The catalysed reaction is (S)-malate = fumarate + H2O. Its pathway is carbohydrate metabolism; tricarboxylic acid cycle; (S)-malate from fumarate: step 1/1. Its function is as follows. Involved in the TCA cycle. Catalyzes the stereospecific interconversion of fumarate to L-malate. The chain is Fumarate hydratase class II from Parasynechococcus marenigrum (strain WH8102).